The following is a 366-amino-acid chain: MSSTRRMQILRAVVEDYIRQQEPIGSGALAAKHHLGVSPATIRNDMAALEDEGYLTQPHTSAGRIPTEKGYRYFVNSLSTPIPLTAEQRESISSALSGSASLQDTLQRAARILSTITGQYAMVSAPSLSRSLMRHVELLPLAAHTLLLVTITETGRVVQRLVSTDTLPNTEQTQCICETINTHCRLLTFRQCAQSIRTLPTDSEGGFTPQLRDAIAAVFSDMENEERPNELFTSGAASLTHQHIDAASLAPLFDALEEQVVLMRLMYDLTGQPGQEGVGVAIGSETHTPGLLHASVVSSGYGQSSTPSANVEHEEYDTGTKPTMPIAVIGSIGPTHMNYAVTMAAVHAVSRYLTEFLRVGHNGWQE.

Residues 298–309 show a composition bias toward polar residues; the sequence is SSGYGQSSTPSA. Residues 298 to 318 form a disordered region; sequence SSGYGQSSTPSANVEHEEYDT.

The protein belongs to the HrcA family.

In terms of biological role, negative regulator of class I heat shock genes (grpE-dnaK-dnaJ and groELS operons). Prevents heat-shock induction of these operons. The chain is Heat-inducible transcription repressor HrcA from Bifidobacterium animalis subsp. lactis (strain AD011).